A 508-amino-acid chain; its full sequence is Mitochondrial distribution and morphology protein 10 (508 aa).

Residues P160–N195 are disordered.

The protein belongs to the MDM10 family. In terms of assembly, component of the ER-mitochondria encounter structure (ERMES) or MDM complex, composed of MMM1, MDM10, MDM12 and MDM34. Associates with the mitochondrial outer membrane sorting assembly machinery SAM(core) complex.

The protein resides in the mitochondrion outer membrane. Functionally, component of the ERMES/MDM complex, which serves as a molecular tether to connect the endoplasmic reticulum and mitochondria. Components of this complex are involved in the control of mitochondrial shape and protein biogenesis and may function in phospholipid exchange. MDM10 is involved in the late assembly steps of the general translocase of the mitochondrial outer membrane (TOM complex). Functions in the TOM40-specific route of the assembly of outer membrane beta-barrel proteins, including the association of TOM40 with the receptor TOM22 and small TOM proteins. Can associate with the SAM(core) complex as well as the MDM12-MMM1 complex, both involved in late steps of the major beta-barrel assembly pathway, that is responsible for biogenesis of all outer membrane beta-barrel proteins. May act as a switch that shuttles between both complexes and channels precursor proteins into the TOM40-specific pathway. Plays a role in mitochondrial morphology and in the inheritance of mitochondria. This Cryptococcus neoformans var. neoformans serotype D (strain B-3501A) (Filobasidiella neoformans) protein is Mitochondrial distribution and morphology protein 10.